The following is a 149-amino-acid chain: Cell division protein SepF (149 aa).

A disordered region spans residues Ser12–Leu57. Residues Asn13–Tyr24 show a composition bias toward acidic residues. Residues Glu25–Gln41 show a composition bias toward low complexity. Over residues Arg46–Leu57 the composition is skewed to polar residues.

Belongs to the SepF family. Homodimer. Interacts with FtsZ.

Its subcellular location is the cytoplasm. Its function is as follows. Cell division protein that is part of the divisome complex and is recruited early to the Z-ring. Probably stimulates Z-ring formation, perhaps through the cross-linking of FtsZ protofilaments. Its function overlaps with FtsA. The protein is Cell division protein SepF of Leuconostoc mesenteroides subsp. mesenteroides (strain ATCC 8293 / DSM 20343 / BCRC 11652 / CCM 1803 / JCM 6124 / NCDO 523 / NBRC 100496 / NCIMB 8023 / NCTC 12954 / NRRL B-1118 / 37Y).